A 234-amino-acid chain; its full sequence is DEAD-box ATP-dependent RNA helicase 3 (234 aa).

A Q motif motif is present at residues 120-148 (LAVSRLGLPQKLVETLEKRGITKLFPIQR). A Helicase ATP-binding domain is found at 151–234 (LVPALEGRDI…RTVCVYGGVS (84 aa)). 164–171 (AKTGTGKT) is an ATP binding site.

It belongs to the DEAD box helicase family. DDX21/DDX50 subfamily.

The chain is DEAD-box ATP-dependent RNA helicase 3 from Helianthus annuus (Common sunflower).